The sequence spans 130 residues: Succinate dehydrogenase cytochrome b556 subunit (130 aa).

Over 1-26 the chain is Cytoplasmic; that stretch reads MADVNRGNRPLSPHLQVYRLPLAAIT. Residues 27-52 form a helical membrane-spanning segment; it reads SIMTRITGHALVAGIVLITWWLVAAV. The Periplasmic segment spans residues 53–68; sequence TSPGAFACADWVVRSW. Residues 69–89 traverse the membrane as a helical segment; the sequence is LGFIILTGSMWALWYHLLAGL. His84 lines the heme pocket. Residues 90–109 lie on the Cytoplasmic side of the membrane; it reads RHLFYDAGYGLEIEQAHKSS. Residues 110 to 130 form a helical membrane-spanning segment; that stretch reads QALIAGSVVLAVLTLIVFFVF.

The protein belongs to the cytochrome b560 family. Part of an enzyme complex containing four subunits: a flavoprotein, an iron-sulfur protein, plus two membrane-anchoring proteins, SdhC and SdhD. The complex can form homotrimers. The cofactor is heme.

The protein resides in the cell inner membrane. It participates in carbohydrate metabolism; tricarboxylic acid cycle. Its function is as follows. Membrane-anchoring subunit of succinate dehydrogenase (SDH). The chain is Succinate dehydrogenase cytochrome b556 subunit (sdhC) from Paracoccus denitrificans.